The sequence spans 252 residues: Triosephosphate isomerase (252 aa).

Substrate is bound at residue 10-12 (NWK). The active-site Electrophile is the His-96. Catalysis depends on Glu-168, which acts as the Proton acceptor. Substrate is bound by residues Gly-174, Ser-214, and 235 to 236 (GG).

It belongs to the triosephosphate isomerase family. Homodimer.

It localises to the cytoplasm. The enzyme catalyses D-glyceraldehyde 3-phosphate = dihydroxyacetone phosphate. It participates in carbohydrate biosynthesis; gluconeogenesis. Its pathway is carbohydrate degradation; glycolysis; D-glyceraldehyde 3-phosphate from glycerone phosphate: step 1/1. Its function is as follows. Involved in the gluconeogenesis. Catalyzes stereospecifically the conversion of dihydroxyacetone phosphate (DHAP) to D-glyceraldehyde-3-phosphate (G3P). The chain is Triosephosphate isomerase from Streptococcus pneumoniae serotype 2 (strain D39 / NCTC 7466).